The chain runs to 424 residues: Carbohydrate sulfotransferase 8 (424 aa).

The Cytoplasmic portion of the chain corresponds to methionine 1–leucine 10. The chain crosses the membrane as a helical; Signal-anchor for type II membrane protein span at residues alanine 11 to leucine 31. Residues glutamine 32–tyrosine 424 are Lumenal-facing. A disordered region spans residues phenylalanine 47 to leucine 107. Residues glycine 66 to arginine 77 show a composition bias toward basic and acidic residues. Asparagine 128 is a glycosylation site (N-linked (GlcNAc...) asparagine). 3'-phosphoadenylyl sulfate contacts are provided by residues proline 198–asparagine 204 and arginine 258–serine 266. 3 N-linked (GlcNAc...) asparagine glycosylation sites follow: asparagine 294, asparagine 367, and asparagine 415.

Belongs to the sulfotransferase 2 family. In terms of tissue distribution, predominantly expressed in pituitary gland. In brain, it is expressed in pituitary gland, cerebellum, medulla oblongata, pons, thalamus and spinal cord. Expressed in the epidermis. Expressed at lower level in lung, spleen, adrenal gland, placenta, prostate, testis, mammary gland and trachea.

It localises to the golgi apparatus membrane. Functionally, catalyzes the transfer of sulfate to position 4 of non-reducing N-acetylgalactosamine (GalNAc) residues in both N-glycans and O-glycans. Required for biosynthesis of glycoprotein hormones lutropin and thyrotropin, by mediating sulfation of their carbohydrate structures. Only active against terminal GalNAcbeta1,GalNAcbeta. Not active toward chondroitin. In Homo sapiens (Human), this protein is Carbohydrate sulfotransferase 8 (CHST8).